The sequence spans 132 residues: Fatty acid-binding protein 1 (132 aa).

Residues arginine 106 and 128 to 130 (RYY) each bind a fatty acid.

It belongs to the calycin superfamily. Fatty-acid binding protein (FABP) family. Monomer. In terms of tissue distribution, midgut.

The protein localises to the cytoplasm. In terms of biological role, binds fatty acids in a 1:1 molar ratio. This Manduca sexta (Tobacco hawkmoth) protein is Fatty acid-binding protein 1 (MFB1).